The sequence spans 863 residues: Dipeptidyl peptidase 9 (863 aa).

A disordered region spans residues 1 to 20 (MATTGTPTADRGDAAATDDP). N-acetylalanine is present on Ala2. Catalysis depends on charge relay system residues Ser730, Asp808, and His840. Ser730 provides a ligand contact to Val-boroPro.

The protein belongs to the peptidase S9B family. DPPIV subfamily. Homodimer. Forms a ternary complex with NLRP1, composed of a DPP9 homodimer, one full-length NLRP1 protein, and one cleaved C-terminus of NLRP1 (NACHT, LRR and PYD domains-containing protein 1, C-terminus). Forms a ternary complex with CARD8, composed of a DPP9 homodimer, one full-length NLRP1 protein, and one cleaved C-terminus of CARD8 (Caspase recruitment domain-containing protein 8, C-terminus). In the ternary complex, only one subunit of the DPP9 homodimer is bound to NLRP1 or CARD8. As to expression, ubiquitously expressed, with highest levels in liver, heart and muscle, and lowest levels in brain.

Its subcellular location is the cytoplasm. It localises to the cytosol. The protein localises to the nucleus. It carries out the reaction Release of an N-terminal dipeptide, Xaa-Yaa-|-Zaa-, from a polypeptide, preferentially when Yaa is Pro, provided Zaa is neither Pro nor hydroxyproline.. Its activity is regulated as follows. Inhibited by the serine proteinase inhibitor 4-(2-aminoethyl)benzenesulphonyl fluoride (AEBSF), and by di-isopropylfluorophosphate. Inhibited by Val-boroPro (Talabostat, PT-100), a non-selective inhibitor, which triggers pyroptosis in monocytes and macrophages. Val-boroPro inhibits activity by binding to the active site, mimicking a substrate-bound state, thereby displacing the C-terminal fragment of NLRP1, leading to activation of the NLRP1 inflammasome. In contrast, Val-boroPro does not directly displaces CARD8: it acts by promoting degradation of the N-terminal part of CARD8, leading to indirect disruption of the ternary complex. Chemical inhibition of DPP9 by Val-boroPro in HIV-1-infected cells activates the CARD8 inflammasome, triggering cell death, offering a promising strategy for the elimination of HIV-1 reservoirs in people living with HIV-1. Dipeptidyl peptidase that cleaves off N-terminal dipeptides from proteins having a Pro or Ala residue at position 2. Acts as a key inhibitor of caspase-1-dependent monocyte and macrophage pyroptosis in resting cells by preventing activation of NLRP1 and CARD8. Sequesters the cleaved C-terminal part of NLRP1 and CARD8, which respectively constitute the active part of the NLRP1 and CARD8 inflammasomes, in a ternary complex, thereby preventing their oligomerization and activation. The dipeptidyl peptidase activity is required to suppress NLRP1 and CARD8; however, neither NLRP1 nor CARD8 are bona fide substrates of DPP9, suggesting the existence of substrate(s) required for NLRP1 and CARD8 inhibition. This Homo sapiens (Human) protein is Dipeptidyl peptidase 9.